Reading from the N-terminus, the 177-residue chain is ATP synthase subunit delta (177 aa).

The protein belongs to the ATPase delta chain family. In terms of assembly, F-type ATPases have 2 components, F(1) - the catalytic core - and F(0) - the membrane proton channel. F(1) has five subunits: alpha(3), beta(3), gamma(1), delta(1), epsilon(1). F(0) has three main subunits: a(1), b(2) and c(10-14). The alpha and beta chains form an alternating ring which encloses part of the gamma chain. F(1) is attached to F(0) by a central stalk formed by the gamma and epsilon chains, while a peripheral stalk is formed by the delta and b chains.

The protein resides in the cell inner membrane. In terms of biological role, f(1)F(0) ATP synthase produces ATP from ADP in the presence of a proton or sodium gradient. F-type ATPases consist of two structural domains, F(1) containing the extramembraneous catalytic core and F(0) containing the membrane proton channel, linked together by a central stalk and a peripheral stalk. During catalysis, ATP synthesis in the catalytic domain of F(1) is coupled via a rotary mechanism of the central stalk subunits to proton translocation. Its function is as follows. This protein is part of the stalk that links CF(0) to CF(1). It either transmits conformational changes from CF(0) to CF(1) or is implicated in proton conduction. The sequence is that of ATP synthase subunit delta from Haemophilus ducreyi (strain 35000HP / ATCC 700724).